The chain runs to 55 residues: Seripauperin-7 (55 aa).

Residues methionine 1–alanine 20 form the signal peptide.

The protein belongs to the SRP1/TIP1 family. Seripauperin subfamily.

The polypeptide is Seripauperin-7 (PAU7) (Saccharomyces cerevisiae (strain ATCC 204508 / S288c) (Baker's yeast)).